We begin with the raw amino-acid sequence, 344 residues long: Uroporphyrinogen decarboxylase (344 aa).

Residues 23–27 (RQAGR), Asp-73, Tyr-149, Thr-204, and His-321 contribute to the substrate site.

The protein belongs to the uroporphyrinogen decarboxylase family. Homodimer.

It localises to the cytoplasm. The catalysed reaction is uroporphyrinogen III + 4 H(+) = coproporphyrinogen III + 4 CO2. The protein operates within porphyrin-containing compound metabolism; protoporphyrin-IX biosynthesis; coproporphyrinogen-III from 5-aminolevulinate: step 4/4. Functionally, catalyzes the decarboxylation of four acetate groups of uroporphyrinogen-III to yield coproporphyrinogen-III. This is Uroporphyrinogen decarboxylase from Francisella tularensis subsp. mediasiatica (strain FSC147).